Reading from the N-terminus, the 308-residue chain is Small ribosomal subunit protein uS5c (308 aa).

The N-terminal 55 residues, 1–55 (MATTATTTPSATSLTTLHRRIPLFPTTTTLLSLSSSSKPLFLSLSSTRSFPTHLY), are a transit peptide targeting the chloroplast. In terms of domain architecture, S5 DRBM spans 152–215 (FEENVVQVRR…VDARRNIITV (64 aa)).

As to quaternary structure, component of the chloroplast small ribosomal subunit (SSU). Mature 70S chloroplast ribosomes of higher plants consist of a small (30S) and a large (50S) subunit. The 30S small subunit contains 1 molecule of ribosomal RNA (16S rRNA) and 24 different proteins. The 50S large subunit contains 3 rRNA molecules (23S, 5S and 4.5S rRNA) and 33 different proteins. uS5c binds directly to 16S ribosomal RNA.

The protein localises to the plastid. Its subcellular location is the chloroplast. In terms of biological role, component of the chloroplast ribosome (chloro-ribosome), a dedicated translation machinery responsible for the synthesis of chloroplast genome-encoded proteins, including proteins of the transcription and translation machinery and components of the photosynthetic apparatus. This chain is Small ribosomal subunit protein uS5c (rps5), found in Spinacia oleracea (Spinach).